The sequence spans 215 residues: Pyridoxine/pyridoxamine 5'-phosphate oxidase (215 aa).

Substrate is bound by residues 9–12 and Lys69; that span reads RRDY. FMN is bound by residues 64–69, 79–80, Lys86, and Gln108; these read RILLLK and FT. The substrate site is built by Tyr126, Arg130, and Ser134. Residues 143–144 and Trp188 contribute to the FMN site; that span reads QS. 194–196 contacts substrate; that stretch reads RLH. Arg198 serves as a coordination point for FMN.

Belongs to the pyridoxamine 5'-phosphate oxidase family. As to quaternary structure, homodimer. FMN serves as cofactor.

It carries out the reaction pyridoxamine 5'-phosphate + O2 + H2O = pyridoxal 5'-phosphate + H2O2 + NH4(+). The enzyme catalyses pyridoxine 5'-phosphate + O2 = pyridoxal 5'-phosphate + H2O2. It functions in the pathway cofactor metabolism; pyridoxal 5'-phosphate salvage; pyridoxal 5'-phosphate from pyridoxamine 5'-phosphate: step 1/1. The protein operates within cofactor metabolism; pyridoxal 5'-phosphate salvage; pyridoxal 5'-phosphate from pyridoxine 5'-phosphate: step 1/1. Functionally, catalyzes the oxidation of either pyridoxine 5'-phosphate (PNP) or pyridoxamine 5'-phosphate (PMP) into pyridoxal 5'-phosphate (PLP). The sequence is that of Pyridoxine/pyridoxamine 5'-phosphate oxidase from Pseudomonas fluorescens (strain SBW25).